Reading from the N-terminus, the 403-residue chain is Argininosuccinate synthase (403 aa).

10–18 contributes to the ATP binding site; the sequence is AYSGGLDTS. An L-citrulline-binding site is contributed by Tyr87. Gly117 provides a ligand contact to ATP. Thr119, Asn123, and Asp124 together coordinate L-aspartate. An L-citrulline-binding site is contributed by Asn123. L-citrulline contacts are provided by Arg127, Ser175, Glu260, and Tyr272.

This sequence belongs to the argininosuccinate synthase family. Type 1 subfamily. In terms of assembly, homotetramer.

It is found in the cytoplasm. It carries out the reaction L-citrulline + L-aspartate + ATP = 2-(N(omega)-L-arginino)succinate + AMP + diphosphate + H(+). It participates in amino-acid biosynthesis; L-arginine biosynthesis; L-arginine from L-ornithine and carbamoyl phosphate: step 2/3. This Bacillus velezensis (strain DSM 23117 / BGSC 10A6 / LMG 26770 / FZB42) (Bacillus amyloliquefaciens subsp. plantarum) protein is Argininosuccinate synthase.